A 338-amino-acid chain; its full sequence is Secretory carrier-associated membrane protein 1 (338 aa).

The tract at residues 1 to 64 is disordered; sequence MSDFDSNPFA…NVPNTQPAIM (64 aa). Residue Ser-2 is modified to N-acetylserine. Ser-2 carries the post-translational modification Phosphoserine. Over 2 to 155 the chain is Cytoplasmic; the sequence is SDFDSNPFAD…QKTVKLMYYL (154 aa). Thr-45 carries the phosphothreonine modification. Residues 156–176 form a helical membrane-spanning segment; that stretch reads WMFHAVTLFLNIFGCLAWFCV. Topologically, residues 177–181 are lumenal; it reads DSSRA. Residues 182–202 form a helical membrane-spanning segment; sequence VDFGLSILWFLLFTPCSFVCW. Topologically, residues 203 to 218 are cytoplasmic; that stretch reads YRPLYGAFRSDSSFRF. Residues 219–239 traverse the membrane as a helical segment; the sequence is FVFFFVYICQFAVHVLQAAGF. The Lumenal segment spans residues 240–261; sequence HNWGNCGWISSLTGLNKNIPVG. A helical transmembrane segment spans residues 262–282; the sequence is IMMIIIAALFTASAVISLVMF. Residues 283–338 are Cytoplasmic-facing; it reads KKVHGLYRTTGASFEKAQQEFATGVMSNKTVQTAAANAASTAATSAAQNAFKGNQM.

Belongs to the SCAMP family. Interacts with SYNRG, ITSN1 and SLC9A7.

It localises to the golgi apparatus. The protein localises to the trans-Golgi network membrane. Its subcellular location is the recycling endosome membrane. Its function is as follows. Functions in post-Golgi recycling pathways. Acts as a recycling carrier to the cell surface. The sequence is that of Secretory carrier-associated membrane protein 1 (Scamp1) from Mus musculus (Mouse).